Consider the following 299-residue polypeptide: Taste receptor type 2 member 50 (299 aa).

Met1 is a topological domain (extracellular). A helical membrane pass occupies residues 2–22; the sequence is ITFLYIFFSILILVLFVLGNF. The Cytoplasmic segment spans residues 23–55; it reads ANGFIALVNFIDWVKRKKISSADQILTALAVSR. Residues 56-76 traverse the membrane as a helical segment; the sequence is IGLLWALLLNWYLTVLNPAFY. The Extracellular segment spans residues 77–87; the sequence is SVELRITSYNA. The helical transmembrane segment at 88–108 threads the bilayer; the sequence is WVVTNHFSMWLAASLSIFYLL. The Cytoplasmic segment spans residues 109–126; it reads KIANFSNLIFLHLKRRVR. The chain crosses the membrane as a helical span at residues 127–147; the sequence is SVILVILLGTLIFLVCHLLVA. Over 148–181 the chain is Extracellular; that stretch reads NMDESMWAEEYEGNMTGKMKLRNTVHLSYLTVTT. The N-linked (GlcNAc...) asparagine glycan is linked to Asn161. Residues 182–202 traverse the membrane as a helical segment; the sequence is LWSFIPFTLSLISFLMLICSL. The Cytoplasmic portion of the chain corresponds to 203 to 229; that stretch reads CKHLKKMQLHGEGSQDLSTKVHIKALQ. The helical transmembrane segment at 230-250 threads the bilayer; the sequence is TLISFLLLCAIFFLFLIISVW. The Extracellular portion of the chain corresponds to 251-259; sequence SPRRLQNDP. A helical transmembrane segment spans residues 260-280; sequence VVMVSKAVGNIYLAFDSFILI. Residues 281–299 lie on the Cytoplasmic side of the membrane; the sequence is WRTKKLKHTFLLILCQIRC.

The protein belongs to the G-protein coupled receptor T2R family.

It is found in the membrane. Functionally, receptor that may play a role in the perception of bitterness and is gustducin-linked. May play a role in sensing the chemical composition of the gastrointestinal content. The activity of this receptor may stimulate alpha gustducin, mediate PLC-beta-2 activation and lead to the gating of TRPM5. The sequence is that of Taste receptor type 2 member 50 (TAS2R50) from Gorilla gorilla gorilla (Western lowland gorilla).